The sequence spans 1023 residues: Exportin-T (1023 aa).

Belongs to the exportin family.

The protein resides in the nucleus. The protein localises to the cytoplasm. Functionally, tRNA nucleus export receptor which facilitates tRNA translocation across the nuclear pore complex. Involved in pre-tRNA splicing, probably by affecting the interaction of pre-tRNA with splicing endonuclease. In Sclerotinia sclerotiorum (strain ATCC 18683 / 1980 / Ss-1) (White mold), this protein is Exportin-T (los1).